A 379-amino-acid polypeptide reads, in one-letter code: Copper-containing nitrite reductase (379 aa).

The segment at residues 1-32 (MSEQFRLTRRSMLAGAAVAGALAPVVTSVAHA) is a signal peptide (tat-type signal). Plastocyanin-like domains lie at 33–214 (EGGG…YDKV) and 215–379 (YYVG…PTSG). Cu cation is bound by residues histidine 134, histidine 139, histidine 174, cysteine 175, histidine 184, methionine 189, and histidine 345.

It belongs to the multicopper oxidase family. Homotrimer. Cu(2+) is required as a cofactor. The cofactor is Cu(+). It depends on FAD as a cofactor. In terms of processing, predicted to be exported by the Tat system. The position of the signal peptide cleavage has not been experimentally proven.

It localises to the periplasm. The catalysed reaction is nitric oxide + Fe(III)-[cytochrome c] + H2O = Fe(II)-[cytochrome c] + nitrite + 2 H(+). Its pathway is nitrogen metabolism; nitrate reduction (denitrification); dinitrogen from nitrate: step 2/4. The sequence is that of Copper-containing nitrite reductase (nirU) from Neorhizobium galegae (Rhizobium galegae).